The following is a 2036-amino-acid chain: Bikaverin polyketide synthase bik1 (2036 aa).

The interval 8 to 242 (YVFGDQSTPV…YPAPIYGPYH (235 aa)) is N-terminal acylcarrier protein transacylase domain (SAT). A Ketosynthase family 3 (KS3) domain is found at 370-801 (ENKIAIIGFS…GGNTSLLLED (432 aa)). Active-site for beta-ketoacyl synthase activity residues include C541, H676, and H718. The segment at 908–1209 (FLFTGQGAQE…LASLRRKEDH (302 aa)) is acyl/malonyl transferases. Residue S997 is the For acyl/malonyl transferase activity of the active site. Positions 1293–1425 (HNVIEQVHGD…CDVAVENPSS (133 aa)) are N-terminal hotdog fold. Residues 1293 to 1600 (HNVIEQVHGD…FKKVARKVLE (308 aa)) enclose the PKS/mFAS DH domain. A product template (PT) domain region spans residues 1295 to 1599 (VIEQVHGDKR…TFKKVARKVL (305 aa)). Residue H1325 is the Proton acceptor; for dehydratase activity of the active site. The tract at residues 1452–1600 (SAHMMRRGLL…FKKVARKVLE (149 aa)) is C-terminal hotdog fold. The active-site Proton donor; for dehydratase activity is the D1511. A disordered region spans residues 1628 to 1654 (VLTPPSTTSHSVGTTSPPEPTESPVGS). The segment covering 1638 to 1654 (SVGTTSPPEPTESPVGS) has biased composition (low complexity). In terms of domain architecture, Carrier spans 1653 to 1730 (GSASGLIQKA…DLKSFLGAND (78 aa)). At S1690 the chain carries O-(pantetheine 4'-phosphoryl)serine. The disordered stretch occupies residues 1733–1758 (FSSSNSEAESSASSAASTSPSDHGDD). Low complexity predominate over residues 1734–1753 (SSSNSEAESSASSAASTSPS). The For thioesterase activity role is filled by S1857.

Its pathway is secondary metabolite biosynthesis. Functionally, polyketide synthase; part of the gene cluster that mediates the biosynthesis of bikaverin, a red pigment also considered as a mycotoxin. The first stage is catalyzed by the polyketide synthase bik1, which catalyzes the formation of the intermediate SMA76a also knowm as pre-bikaverin. FAD-dependent monooxygenase bik2 might then be responsible for the oxidation of pre-bikaverin to oxo-pre-bikaverin which is in turn methylated by the O-methyltransferase bik3 to me-oxo-pre-bikaverin. A further cycle of oxydation and methylation by bik2 and bik3 leads to the final product of bikaverin, via a nor-bikaverin intermediate. The sequence is that of Bikaverin polyketide synthase bik1 from Gibberella fujikuroi (strain CBS 195.34 / IMI 58289 / NRRL A-6831) (Bakanae and foot rot disease fungus).